Reading from the N-terminus, the 2594-residue chain is Protein sevenless (2594 aa).

2 disordered regions span residues 1 to 34 and 49 to 92; these read MFWR…PKRL and KMST…RVRR. At 1 to 2141 the chain is on the extracellular side; sequence MFWREDAAQQ…FVSPEKRGSL (2141 aa). Low complexity predominate over residues 9–26; the sequence is QQQQQQQQQQQQQQQQQQ. 10 N-linked (GlcNAc...) asparagine glycosylation sites follow: asparagine 77, asparagine 401, asparagine 508, asparagine 532, asparagine 641, asparagine 667, asparagine 778, asparagine 797, asparagine 874, and asparagine 980. Fibronectin type-III domains lie at 358 to 462 and 468 to 560; these read ETTQ…TPME and APII…SPLE. One can recognise a Fibronectin type-III 3 domain in the interval 838–938; the sequence is PPAPRELRAL…APLATRTWPL (101 aa). One copy of the LDL-receptor class B repeat lies at 1024–1066; that stretch reads GLLYWTDLARDCVQRLDPFSGERELLPIFGARHLALDSAQGHL. Fibronectin type-III domains lie at 1227–1317 and 1324–1430; these read LAVP…QLDT and QPRR…VQSV. Asparagine 1257, asparagine 1344, asparagine 1382, asparagine 1577, asparagine 1587, asparagine 1665, asparagine 1752, asparagine 1776, asparagine 1824, asparagine 1908, asparagine 1966, and asparagine 2088 each carry an N-linked (GlcNAc...) asparagine glycan. Fibronectin type-III domains follow at residues 1711-1814, 1821-1920, 1922-2010, and 2014-2132; these read TAAA…TLHT, APRN…SYAP, PPLQ…TLGD, and APGR…AEPF. The helical transmembrane segment at 2142 to 2162 threads the bilayer; it reads VLAIIAPAAIVSSCVLALVLV. Over 2163–2594 the chain is Cytoplasmic; sequence RKLQKRRHRA…LYANEGISGL (432 aa). The Protein kinase domain maps to 2224-2495; that stretch reads LTLLRFLGSG…KRCLSTLQAL (272 aa). ATP-binding positions include 2230–2238 and lysine 2257; that span reads LGSGAFGEV. The Proton acceptor role is filled by aspartate 2355. Tyrosine 2391 is modified (phosphotyrosine; by autocatalysis). The interval 2543–2568 is disordered; it reads TVSTTDADTTGSPTTPTAPTTPTTTT. The span at 2545 to 2568 shows a compositional bias: low complexity; that stretch reads STTDADTTGSPTTPTAPTTPTTTT.

It belongs to the protein kinase superfamily. Tyr protein kinase family. Insulin receptor subfamily.

Its subcellular location is the cell membrane. It catalyses the reaction L-tyrosyl-[protein] + ATP = O-phospho-L-tyrosyl-[protein] + ADP + H(+). Receptor for an extracellular signal required to instruct a cell to differentiate into a R7 photoreceptor. The ligand for Sev is the Boss (Bride of Sevenless) protein. This chain is Protein sevenless (sev), found in Drosophila virilis (Fruit fly).